Consider the following 359-residue polypeptide: Phosphoserine aminotransferase (359 aa).

Arg-41 contacts L-glutamate. Residues 75 to 76 (AS), Trp-101, Thr-152, Asp-171, and Gln-194 each bind pyridoxal 5'-phosphate. N6-(pyridoxal phosphate)lysine is present on Lys-195. 236-237 (NT) is a binding site for pyridoxal 5'-phosphate.

The protein belongs to the class-V pyridoxal-phosphate-dependent aminotransferase family. SerC subfamily. As to quaternary structure, homodimer. Requires pyridoxal 5'-phosphate as cofactor.

Its subcellular location is the cytoplasm. The catalysed reaction is O-phospho-L-serine + 2-oxoglutarate = 3-phosphooxypyruvate + L-glutamate. It carries out the reaction 4-(phosphooxy)-L-threonine + 2-oxoglutarate = (R)-3-hydroxy-2-oxo-4-phosphooxybutanoate + L-glutamate. It participates in amino-acid biosynthesis; L-serine biosynthesis; L-serine from 3-phospho-D-glycerate: step 2/3. The protein operates within cofactor biosynthesis; pyridoxine 5'-phosphate biosynthesis; pyridoxine 5'-phosphate from D-erythrose 4-phosphate: step 3/5. Catalyzes the reversible conversion of 3-phosphohydroxypyruvate to phosphoserine and of 3-hydroxy-2-oxo-4-phosphonooxybutanoate to phosphohydroxythreonine. The sequence is that of Phosphoserine aminotransferase from Acinetobacter baumannii (strain AB307-0294).